Reading from the N-terminus, the 358-residue chain is tRNA-specific 2-thiouridylase MnmA (358 aa).

Residues 8-15 and M34 contribute to the ATP site; that span reads GMSGGVDS. The Nucleophile role is filled by C103. Cysteines 103 and 199 form a disulfide. G127 contacts ATP. The interaction with tRNA stretch occupies residues 149 to 151; it reads KDQ. C199 functions as the Cysteine persulfide intermediate in the catalytic mechanism. The interval 305–306 is interaction with tRNA; it reads RY.

The protein belongs to the MnmA/TRMU family.

The protein resides in the cytoplasm. The catalysed reaction is S-sulfanyl-L-cysteinyl-[protein] + uridine(34) in tRNA + AH2 + ATP = 2-thiouridine(34) in tRNA + L-cysteinyl-[protein] + A + AMP + diphosphate + H(+). Functionally, catalyzes the 2-thiolation of uridine at the wobble position (U34) of tRNA, leading to the formation of s(2)U34. The protein is tRNA-specific 2-thiouridylase MnmA of Clostridium beijerinckii (strain ATCC 51743 / NCIMB 8052) (Clostridium acetobutylicum).